Here is a 191-residue protein sequence, read N- to C-terminus: Cell division protein SepF (191 aa).

The span at 150–164 shows a compositional bias: low complexity; the sequence is TSSSPEEASPSSVST. The segment at 150–191 is disordered; it reads TSSSPEEASPSSVSTENTPQYSLGKNTTPEPAWGNSKLSAYS. Positions 165 to 178 are enriched in polar residues; the sequence is ENTPQYSLGKNTTP.

The protein belongs to the SepF family. As to quaternary structure, homodimer. Interacts with FtsZ.

Its subcellular location is the cytoplasm. In terms of biological role, cell division protein that is part of the divisome complex and is recruited early to the Z-ring. Probably stimulates Z-ring formation, perhaps through the cross-linking of FtsZ protofilaments. Its function overlaps with FtsA. The sequence is that of Cell division protein SepF from Prochlorococcus marinus (strain AS9601).